The chain runs to 391 residues: Tryptophan synthase beta chain (391 aa).

The residue at position 86 (K86) is an N6-(pyridoxal phosphate)lysine.

The protein belongs to the TrpB family. In terms of assembly, tetramer of two alpha and two beta chains. Requires pyridoxal 5'-phosphate as cofactor.

It carries out the reaction (1S,2R)-1-C-(indol-3-yl)glycerol 3-phosphate + L-serine = D-glyceraldehyde 3-phosphate + L-tryptophan + H2O. It functions in the pathway amino-acid biosynthesis; L-tryptophan biosynthesis; L-tryptophan from chorismate: step 5/5. The beta subunit is responsible for the synthesis of L-tryptophan from indole and L-serine. The polypeptide is Tryptophan synthase beta chain (Vibrio metschnikovii).